The primary structure comprises 325 residues: Urease accessory protein UreD (325 aa).

The protein belongs to the UreD family. In terms of assembly, ureD, UreF and UreG form a complex that acts as a GTP-hydrolysis-dependent molecular chaperone, activating the urease apoprotein by helping to assemble the nickel containing metallocenter of UreC. The UreE protein probably delivers the nickel.

Its subcellular location is the cytoplasm. In terms of biological role, required for maturation of urease via the functional incorporation of the urease nickel metallocenter. Expression of the urease operon increases the likelihood of bacterial survival by contributing to acid resistance in vitro and in vivo in BALB/c mice. Y.enterocolitica enters the body via an oral path and must survive the acidic stomach before being able to colonize the intestinal mucosa. This chain is Urease accessory protein UreD, found in Yersinia enterocolitica.